The sequence spans 187 residues: dTTP/UTP pyrophosphatase (187 aa).

The active-site Proton acceptor is the Asp65.

The protein belongs to the Maf family. YhdE subfamily. A divalent metal cation serves as cofactor.

The protein resides in the cytoplasm. It catalyses the reaction dTTP + H2O = dTMP + diphosphate + H(+). The catalysed reaction is UTP + H2O = UMP + diphosphate + H(+). In terms of biological role, nucleoside triphosphate pyrophosphatase that hydrolyzes dTTP and UTP. May have a dual role in cell division arrest and in preventing the incorporation of modified nucleotides into cellular nucleic acids. The sequence is that of dTTP/UTP pyrophosphatase from Deinococcus geothermalis (strain DSM 11300 / CIP 105573 / AG-3a).